The chain runs to 160 residues: Putative control protein C.MjaVP (160 aa).

Its function is as follows. May be involved in control of expression of the type II restriction enzyme MjaV and/or its methyltransferase M.MjaV. The chain is Putative control protein C.MjaVP from Methanocaldococcus jannaschii (strain ATCC 43067 / DSM 2661 / JAL-1 / JCM 10045 / NBRC 100440) (Methanococcus jannaschii).